Consider the following 206-residue polypeptide: Thymidylate kinase (206 aa).

16–23 (GIDGTGKS) lines the ATP pocket.

The protein belongs to the thymidylate kinase family.

The enzyme catalyses dTMP + ATP = dTDP + ADP. In terms of biological role, phosphorylation of dTMP to form dTDP in both de novo and salvage pathways of dTTP synthesis. The chain is Thymidylate kinase from Akkermansia muciniphila (strain ATCC BAA-835 / DSM 22959 / JCM 33894 / BCRC 81048 / CCUG 64013 / CIP 107961 / Muc).